The sequence spans 157 residues: Phosphomannomutase (157 aa).

Serine 98 acts as the Phosphoserine intermediate in catalysis. A Mg(2+)-binding site is contributed by serine 98.

The protein belongs to the phosphohexose mutase family. Requires Mg(2+) as cofactor.

The enzyme catalyses alpha-D-mannose 1-phosphate = D-mannose 6-phosphate. It participates in nucleotide-sugar biosynthesis; GDP-alpha-D-mannose biosynthesis; alpha-D-mannose 1-phosphate from D-fructose 6-phosphate: step 2/2. It functions in the pathway capsule biogenesis; capsule polysaccharide biosynthesis. Involved in the biosynthesis of the K2 capsular polysaccharide biosynthesis. The chain is Phosphomannomutase (manB) from Klebsiella pneumoniae.